The chain runs to 95 residues: Small ribosomal subunit protein bS6 (95 aa).

The protein belongs to the bacterial ribosomal protein bS6 family.

In terms of biological role, binds together with bS18 to 16S ribosomal RNA. This Geobacillus sp. (strain WCH70) protein is Small ribosomal subunit protein bS6.